The chain runs to 1068 residues: MSAPNRQLVPIPGPSALPIVGNTFDLDLDASIQSLVNMFEEYGPVFQLTIAGHKQIFVGNVQLTNEVCDESRFCKIVFSGLELLRSAVHDGLFTAHEGERNWDIAHRILMPVFGPTKIRGMFDQMNDIAQQLCLKWGRYGPTFPIEVTEDFTRLTLDTIALCAMGYRFNSFYRDNMHPFVDRMNRFLKDTNTQSGLPDLFNSLWLHAKKRNKEDIKAMREFSQEVVDQRRQNPVDADDLLNALLHQTDPKTGEGLSDSSIIDNMITFLVAGHETTSGLLSFAFYYMLKNPWAMEKAQQEVDNVIGTERVTVNHLSKLEYLNAILRETLRLMPTAPAFTVGALKDDVIGGKYAVKKGEPINPILQAVHCDKEVYGPDATEWKPERMLEEGFHKLPANSWKPFGNGKRGCIGRAFAWQEALLVVAVLLQSFTFTEDDPSYQLRIREALTIKPDGFKIRATLREHKTTAGMVPESVQSLRQAQKSGKPGNSKSSANESMVGQGNGRSVSIFYGSNSGSCESLANLLASDCAKYGFSVQTTDALDAARENFTSNQIVLIVASTYDGKPADNATEFVNWLKSLTGEPLKGVSYAVFGCGHHDWATTFYKIPILIDELLEQRGAQRVAPRGAANAAVSDLFSDLEKWEESILWPALGLTPALLESQGDTQPRLTISFQRPYTQRKEFLEATVTSASELTTSASPSRKCHMELQLPQDMTYNTGDYLAVLPLNPLSNVQRALSRFHLAWDSVLVIEATGPTQLPTATPISVADLFGAYVELSQPATPRNIRALAGAASDEPTKQALLKLAEDDFATQVRDKRLSVLDLLGQYESVALPVEAFIEMLLPLRPRTYSISSAPQWNPSHASITWSIIDTVSWSGHGRFLGVASNHLYDLSPGAVVRVSVRRSNPAFHPPQDPNSYPIIMIASGSGLAPFRGFIQERALQQKAGMTLAPALLFFGCRGRDDDLHRAEMDDFEKSGVVRVMRAYSKAPNEPDAFGCAYIQERVWSERKEFRELWNRGATVFVCGGTKMSEAIKDVFIKIAYGNAGQDDNKSSRDWFASLDPHRYVAEVFN.

Cysteine 408 lines the heme pocket. Residues 464–498 are disordered; it reads TTAGMVPESVQSLRQAQKSGKPGNSKSSANESMVG. Positions 472-498 are enriched in polar residues; that stretch reads SVQSLRQAQKSGKPGNSKSSANESMVG. A Flavodoxin-like domain is found at 505–646; the sequence is VSIFYGSNSG…DLEKWEESIL (142 aa). Residues 511–515 and 590–622 contribute to the FMN site; these read SNSGS and VFGC…QRVA. The FAD-binding FR-type domain occupies 679–909; it reads KEFLEATVTS…RRSNPAFHPP (231 aa).

In the N-terminal section; belongs to the cytochrome P450 family. Requires FAD as cofactor. It depends on FMN as a cofactor. Heme serves as cofactor.

The catalysed reaction is 2 oxidized [cytochrome P450] + NADPH = 2 reduced [cytochrome P450] + NADP(+) + H(+). It catalyses the reaction an organic molecule + reduced [NADPH--hemoprotein reductase] + O2 = an alcohol + oxidized [NADPH--hemoprotein reductase] + H2O + H(+). The enzyme catalyses dodecanoate + reduced [NADPH--hemoprotein reductase] + O2 = 3-hydroxydodecanoate + oxidized [NADPH--hemoprotein reductase] + H2O + H(+). It carries out the reaction dodecanoate + reduced [NADPH--hemoprotein reductase] + O2 = 7-hydroxydodecanoate + oxidized [NADPH--hemoprotein reductase] + H2O + H(+). The catalysed reaction is dodecan-1-ol + reduced [NADPH--hemoprotein reductase] + O2 = 1,4-dodecanediol + oxidized [NADPH--hemoprotein reductase] + H2O + H(+). It catalyses the reaction dodecan-1-ol + reduced [NADPH--hemoprotein reductase] + O2 = 1,3-dodecanediol + oxidized [NADPH--hemoprotein reductase] + H2O + H(+). Functionally, self-sufficient cytochrome P450 monooxygenase that catalyzes the regioselective in-chain hydroxylation of alkanes, fatty alcohols, and fatty acids. Preferentially hydroxylates 1-dodecanol at C3 and C4 (positions omega-8 and omega-9). It is very likely that CYP505U2 prefers dodecanol, and probably other fatty alcohols, over fatty acids as substrates. Does not show any significant activity toward tetradecanoic acid. This is Self-sufficient cytochrome P450 monooxygenase CYP505U2 from Exserohilum turcicum (strain 28A) (Northern leaf blight fungus).